Here is a 306-residue protein sequence, read N- to C-terminus: MDTPPLSDSESESDESLVTDRELQDAFSRGLLKPGLNVVLEGPKKAVNDVNGLKQCLAEFKRDLEWVERLDVTLGPVPEIGGSEAPAPQNKDQKAVDPEDDFQREMSFYRQAQAAVLAVLPRLHQLKVPTKRPTDYFAEMAKSDLQMQKIRQKLQTKQAAMERSEKAKQLRALRKYGKKVQTEVLQKRQQEKAHMMNAIKKYQKGFSDKLDFLEGDQKPLAQRKKAGAKGQQMRKGPSAKRRYKNQKFGFGGKKKGSKWNTRESYDDVSSFRAKTAHGRGLKRPGKKGSNKRPGKRTREKMKNRTH.

An N-acetylmethionine modification is found at M1. 2 disordered regions span residues 1–20 (MDTP…LVTD) and 77–99 (VPEI…VDPE). At T3 the chain carries Phosphothreonine. Residues S7, S9, S11, S13, and S16 each carry the phosphoserine modification. Residue K94 forms a Glycyl lysine isopeptide (Lys-Gly) (interchain with G-Cter in SUMO2) linkage. The stretch at 138-169 (AEMAKSDLQMQKIRQKLQTKQAAMERSEKAKQ) forms a coiled coil. Glycyl lysine isopeptide (Lys-Gly) (interchain with G-Cter in SUMO2) cross-links involve residues K179 and K218. The segment at 213–306 (LEGDQKPLAQ…TREKMKNRTH (94 aa)) is disordered. Residues S264 and S270 each carry the phosphoserine modification. Residues 274–306 (KTAHGRGLKRPGKKGSNKRPGKRTREKMKNRTH) are compositionally biased toward basic residues.

This sequence belongs to the EBP2 family. In terms of assembly, specifically interacts with EBV EBNA1. The EBNA1-EBP2 interaction is important for the stable segregation of EBV episomes during cell division. Interacts with WDR46. Ubiquitous.

The protein localises to the nucleus. The protein resides in the nucleolus. In terms of biological role, required for the processing of the 27S pre-rRNA. This is Probable rRNA-processing protein EBP2 (EBNA1BP2) from Homo sapiens (Human).